We begin with the raw amino-acid sequence, 539 residues long: CTP synthase (539 aa).

The interval 1–268 (MADTKYIFVT…DETVLRKVGL (268 aa)) is amidoligase domain. Ser15 lines the CTP pocket. A UTP-binding site is contributed by Ser15. Residue 16–21 (SLGKGI) coordinates ATP. L-glutamine is bound at residue Tyr56. An ATP-binding site is contributed by Asp73. Residues Asp73 and Glu143 each contribute to the Mg(2+) site. CTP contacts are provided by residues 150–152 (DIE), 189–194 (KTKPTQ), and Lys225. Residues 189 to 194 (KTKPTQ) and Lys225 contribute to the UTP site. Residues 294–536 (TIALVGKYVE…IREAIKTRKK (243 aa)) form the Glutamine amidotransferase type-1 domain. Gly356 is a binding site for L-glutamine. Cys383 serves as the catalytic Nucleophile; for glutamine hydrolysis. L-glutamine is bound by residues 384 to 387 (LGMQ), Glu407, and Arg464. Residues His509 and Glu511 contribute to the active site.

The protein belongs to the CTP synthase family. In terms of assembly, homotetramer.

The enzyme catalyses UTP + L-glutamine + ATP + H2O = CTP + L-glutamate + ADP + phosphate + 2 H(+). The catalysed reaction is L-glutamine + H2O = L-glutamate + NH4(+). It carries out the reaction UTP + NH4(+) + ATP = CTP + ADP + phosphate + 2 H(+). The protein operates within pyrimidine metabolism; CTP biosynthesis via de novo pathway; CTP from UDP: step 2/2. Its activity is regulated as follows. Allosterically activated by GTP, when glutamine is the substrate; GTP has no effect on the reaction when ammonia is the substrate. The allosteric effector GTP functions by stabilizing the protein conformation that binds the tetrahedral intermediate(s) formed during glutamine hydrolysis. Inhibited by the product CTP, via allosteric rather than competitive inhibition. Its function is as follows. Catalyzes the ATP-dependent amination of UTP to CTP with either L-glutamine or ammonia as the source of nitrogen. Regulates intracellular CTP levels through interactions with the four ribonucleotide triphosphates. The chain is CTP synthase from Porphyromonas gingivalis (strain ATCC 33277 / DSM 20709 / CIP 103683 / JCM 12257 / NCTC 11834 / 2561).